Consider the following 45-residue polypeptide: Major cold shock protein (45 aa).

The CSD domain maps to 1-45 (EKGFGFISTENGQDVFAHFSAIQTNGFKTLEEGQKVAFDVEEGQR).

In terms of assembly, homodimer.

The protein localises to the cytoplasm. This Streptococcus pyogenes protein is Major cold shock protein (cspA).